A 482-amino-acid polypeptide reads, in one-letter code: BEL1-like homeodomain protein 7 (482 aa).

An SR/KY domain region spans residues 118 to 134 (SKYLKAAQELLDETVNV). The BELL domain stretch occupies residues 167–238 (ERQELQSKLS…CLRDAISGQI (72 aa)). Positions 285–347 (TWRPQRGLPD…NARVRLWKPM (63 aa)) form a DNA-binding region, homeobox. The disordered stretch occupies residues 358 to 401 (DALQENDPNQSSENTPEITEIQELQTESSSNNGHVPGVASSSMR). The span at 363-401 (NDPNQSSENTPEITEIQELQTESSSNNGHVPGVASSSMR) shows a compositional bias: polar residues.

It belongs to the TALE/BELL homeobox family. As to quaternary structure, may form heterodimeric complexes with TALE/KNOX proteins.

Its subcellular location is the nucleus. This chain is BEL1-like homeodomain protein 7 (BLH7), found in Arabidopsis thaliana (Mouse-ear cress).